A 68-amino-acid polypeptide reads, in one-letter code: Serine rich endogenous peptide 13 (68 aa).

The signal sequence occupies residues 1-31 (MATKASNLVVFLLSLLLLFLLISFQVGVADA). The tract at residues 33 to 68 (RNKRQGQEQRVDYDYPRPPTAPIYLPPSKSRKGKGP) is disordered. A compositionally biased stretch (basic and acidic residues) spans 37-47 (QGQEQRVDYDY). The segment covering 48-57 (PRPPTAPIYL) has biased composition (pro residues). Residues 54 to 68 (PIYLPPSKSRKGKGP) carry the SCOOP motif motif. A SxS motif essential for MIK2 binding motif is present at residues 60–62 (SKS).

It belongs to the serine rich endogenous peptide (SCOOP) phytocytokine family. In terms of assembly, interacts with MIK2 (via extracellular leucine-rich repeat domain); this interaction triggers the formation of complex between MIK2 and the BAK1/SERK3 and SERK4 coreceptors, and subsequent BAK1 activation by phosphorylation. As to expression, mostly expressed in stems and flowers and, to a lower extent, in seedlings shoots, roots, siliques, seeds and leaves.

It localises to the cell membrane. It is found in the secreted. The protein localises to the extracellular space. The protein resides in the apoplast. In terms of biological role, brassicaceae-specific phytocytokine (plant endogenous peptide released into the apoplast) perceived by MIK2 in a BAK1/SERK3 and SERK4 coreceptors-dependent manner, that modulates various physiological and antimicrobial processes including growth prevention and reactive oxygen species (ROS) response regulation. Promotes the expression of immune-related marker genes (e.g. WRKY30, WRKY33 and CYP81F2) in a MIK2-dependent manner. Inhibits root growth and regulates root meristems. Prevents general growth and development. Exhibits antibacterial effects against Pseudomonas syringae pv. tomato DC3000, Ralstonia solanacearum, Bacillus subtilis and Agrobacterium tumefaciens, thus being an antimicrobial peptide (AMP). This is Serine rich endogenous peptide 13 from Arabidopsis thaliana (Mouse-ear cress).